The chain runs to 268 residues: Tryptophan synthase alpha chain (268 aa).

Residues Glu49 and Asp60 each act as proton acceptor in the active site.

The protein belongs to the TrpA family. Tetramer of two alpha and two beta chains.

The enzyme catalyses (1S,2R)-1-C-(indol-3-yl)glycerol 3-phosphate + L-serine = D-glyceraldehyde 3-phosphate + L-tryptophan + H2O. It participates in amino-acid biosynthesis; L-tryptophan biosynthesis; L-tryptophan from chorismate: step 5/5. The alpha subunit is responsible for the aldol cleavage of indoleglycerol phosphate to indole and glyceraldehyde 3-phosphate. This chain is Tryptophan synthase alpha chain, found in Yersinia pestis bv. Antiqua (strain Antiqua).